We begin with the raw amino-acid sequence, 131 residues long: Fluoride-specific ion channel FluC 1 (131 aa).

4 helical membrane passes run 4 to 24 (ILLI…LSGW), 32 to 52 (FPLG…LVMY), 66 to 86 (ILLT…SYES), and 95 to 115 (LMQL…AVYL). The Na(+) site is built by Gly-74 and Thr-77.

This sequence belongs to the fluoride channel Fluc/FEX (TC 1.A.43) family.

The protein localises to the cell membrane. The enzyme catalyses fluoride(in) = fluoride(out). Na(+) is not transported, but it plays an essential structural role and its presence is essential for fluoride channel function. Fluoride-specific ion channel. Important for reducing fluoride concentration in the cell, thus reducing its toxicity. This chain is Fluoride-specific ion channel FluC 1, found in Methanosarcina acetivorans (strain ATCC 35395 / DSM 2834 / JCM 12185 / C2A).